Here is an 83-residue protein sequence, read N- to C-terminus: ATP synthase subunit c (83 aa).

2 helical membrane passes run 9–29 (LICV…GIGI) and 51–71 (MVFM…GLVI).

Belongs to the ATPase C chain family. F-type ATPases have 2 components, F(1) - the catalytic core - and F(0) - the membrane proton channel. F(1) has five subunits: alpha(3), beta(3), gamma(1), delta(1), epsilon(1). F(0) has three main subunits: a(1), b(2) and c(10-14). The alpha and beta chains form an alternating ring which encloses part of the gamma chain. F(1) is attached to F(0) by a central stalk formed by the gamma and epsilon chains, while a peripheral stalk is formed by the delta and b chains.

It localises to the cell inner membrane. Its function is as follows. F(1)F(0) ATP synthase produces ATP from ADP in the presence of a proton or sodium gradient. F-type ATPases consist of two structural domains, F(1) containing the extramembraneous catalytic core and F(0) containing the membrane proton channel, linked together by a central stalk and a peripheral stalk. During catalysis, ATP synthesis in the catalytic domain of F(1) is coupled via a rotary mechanism of the central stalk subunits to proton translocation. In terms of biological role, key component of the F(0) channel; it plays a direct role in translocation across the membrane. A homomeric c-ring of between 10-14 subunits forms the central stalk rotor element with the F(1) delta and epsilon subunits. The sequence is that of ATP synthase subunit c from Desulfotalea psychrophila (strain LSv54 / DSM 12343).